Consider the following 355-residue polypeptide: Peptide chain release factor 1 (355 aa).

Glutamine 233 carries the N5-methylglutamine modification. The segment covering 280-293 has biased composition (basic and acidic residues); that stretch reads ERRKKEQERADSRR. Positions 280 to 306 are disordered; that stretch reads ERRKKEQERADSRRGQVGSGNRSERIR.

This sequence belongs to the prokaryotic/mitochondrial release factor family. Methylated by PrmC. Methylation increases the termination efficiency of RF1.

It is found in the cytoplasm. In terms of biological role, peptide chain release factor 1 directs the termination of translation in response to the peptide chain termination codons UAG and UAA. In Rickettsia africae (strain ESF-5), this protein is Peptide chain release factor 1.